The following is a 204-amino-acid chain: Casparian strip membrane protein 2 (204 aa).

Residues 1–41 are Cytoplasmic-facing; that stretch reads MKNESTFIDVPADSSSAMKGKAPLIGVAKDHTASGSGGYNR. A helical transmembrane segment spans residues 42-62; sequence GLSIFDFLLRLAAIVAASVAA. Residues 63–92 are Extracellular-facing; sequence GTMFTSDETLPFFTQFLQFEAGYDDLPTFQ. Residues 93 to 113 form a helical membrane-spanning segment; the sequence is FFVIAMSLVSGYIVLSLPISV. Residues 114–125 lie on the Cytoplasmic side of the membrane; that stretch reads VTIVRPLAAAPR. Residues 126 to 146 form a helical membrane-spanning segment; that stretch reads LLLLVLDTAVMGLTMAAASSA. Residues 147–178 are Extracellular-facing; sequence AAISYVAHNGNQNTNWLPICQQFFDFCQKTSG. A helical membrane pass occupies residues 179–199; it reads AVVSSFVAVVFFMILVVLSGV. The Cytoplasmic segment spans residues 200–204; it reads ALERH.

It belongs to the Casparian strip membrane proteins (CASP) family. Homodimer and heterodimers.

Its subcellular location is the cell membrane. Regulates membrane-cell wall junctions and localized cell wall deposition. Required for establishment of the Casparian strip membrane domain (CSD) and the subsequent formation of Casparian strips, a cell wall modification of the root endodermis that determines an apoplastic barrier between the intraorganismal apoplasm and the extraorganismal apoplasm and prevents lateral diffusion. The polypeptide is Casparian strip membrane protein 2 (Raphanus sativus (Radish)).